Reading from the N-terminus, the 350-residue chain is tRNA uridine(34) hydroxylase (350 aa).

Positions 146 to 240 (DDPDALFIDM…YARKAREQGL (95 aa)) constitute a Rhodanese domain. The active-site Cysteine persulfide intermediate is cysteine 200.

This sequence belongs to the TrhO family.

It carries out the reaction uridine(34) in tRNA + AH2 + O2 = 5-hydroxyuridine(34) in tRNA + A + H2O. In terms of biological role, catalyzes oxygen-dependent 5-hydroxyuridine (ho5U) modification at position 34 in tRNAs, the first step in 5-carboxymethoxyuridine (cmo5U) biosynthesis. May be part of an alternate pathway, which is able to bypass cmo5U biogenesis in a subset of tRNAs under aerobic conditions. This is tRNA uridine(34) hydroxylase from Escherichia coli O127:H6 (strain E2348/69 / EPEC).